We begin with the raw amino-acid sequence, 357 residues long: Anthranilate phosphoribosyltransferase (357 aa).

5-phospho-alpha-D-ribose 1-diphosphate-binding positions include Gly94, 97–98 (GD), Thr102, 104–107 (NLST), 122–130 (KHGNRAASS), and Gly134. Position 94 (Gly94) interacts with anthranilate. Ser106 contacts Mg(2+). Residue Asn125 participates in anthranilate binding. Arg180 contributes to the anthranilate binding site. The Mg(2+) site is built by Asp238 and Glu239.

The protein belongs to the anthranilate phosphoribosyltransferase family. Homodimer. The cofactor is Mg(2+).

The enzyme catalyses N-(5-phospho-beta-D-ribosyl)anthranilate + diphosphate = 5-phospho-alpha-D-ribose 1-diphosphate + anthranilate. The protein operates within amino-acid biosynthesis; L-tryptophan biosynthesis; L-tryptophan from chorismate: step 2/5. Its function is as follows. Catalyzes the transfer of the phosphoribosyl group of 5-phosphorylribose-1-pyrophosphate (PRPP) to anthranilate to yield N-(5'-phosphoribosyl)-anthranilate (PRA). This chain is Anthranilate phosphoribosyltransferase, found in Mycobacterium sp. (strain KMS).